Reading from the N-terminus, the 207-residue chain is A disintegrin and metalloproteinase with thrombospondin motifs 5 (207 aa).

Residues 1 to 74 enclose the Peptidase M12B domain; it reads HAAFTVAHEI…GHGNCLLDLP (74 aa). Position 8 (His8) interacts with Zn(2+). Glu9 is an active-site residue. Positions 12 and 18 each coordinate Zn(2+). 5 disulfides stabilise this stretch: Cys24–Cys53, Cys95–Cys117, Cys106–Cys127, Cys112–Cys146, and Cys140–Cys151. One can recognise a Disintegrin domain in the interval 83–164; sequence ELPGQTYDAS…TKKKYYSTSS (82 aa). N-linked (GlcNAc...) asparagine glycosylation is present at Asn96. Residues 165–205 form the TSP type-1 domain; sequence HGNWGSWGSWGQCSRSCGGGVQFAYRHCNNPAPKNNGRYCT. Residues Trp168 and Trp171 are each glycosylated (C-linked (Man) tryptophan). O-linked (Fuc...) serine glycosylation is present at Ser180.

Requires Zn(2+) as cofactor. The precursor is cleaved by furin and PCSK7 outside of the cell. In terms of processing, glycosylated. Can be O-fucosylated by POFUT2 on a serine or a threonine residue found within the consensus sequence C1-X(2)-(S/T)-C2-G of the TSP type-1 repeat domains where C1 and C2 are the first and second cysteine residue of the repeat, respectively. Fucosylated repeats can then be further glycosylated by the addition of a beta-1,3-glucose residue by the glucosyltransferase, B3GALTL. Fucosylation mediates the efficient secretion of ADAMTS family members. Can also be C-glycosylated with one or two mannose molecules on tryptophan residues within the consensus sequence W-X-X-W of the TPRs, and N-glycosylated. These other glycosylations can also facilitate secretion.

The protein resides in the secreted. Its subcellular location is the extracellular space. It localises to the extracellular matrix. Functionally, metalloproteinase that plays an important role in connective tissue organization, development, inflammation and cell migration. Extracellular matrix (ECM) degrading enzyme that shows proteolytic activity toward the hyalectan group of chondroitin sulfate proteoglycans (CSPGs) including ACAN, VCAN, BCAN and NCAN. Cleavage within the hyalectans occurs at Glu-Xaa recognition motifs. Plays a role in embryonic development, including limb and cardiac morphogenesis, and skeletal muscle development through its VCAN remodeling properties. Cleaves VCAN in the pericellular matrix surrounding myoblasts, facilitating myoblast contact and fusion which is required for skeletal muscle development and regeneration. Participates in the development of brown adipose tissue and browning of white adipose tissue. Plays an important role for T-lymphocyte migration from draining lymph nodes following viral infection. In Bos taurus (Bovine), this protein is A disintegrin and metalloproteinase with thrombospondin motifs 5 (ADAMTS5).